The following is a 145-amino-acid chain: Large ribosomal subunit protein uL15 (145 aa).

A disordered region spans residues 1–52 (MRLNTLSPAAGSKRVKHRPGRGIGSGLGKTGGRGVKGQTSRSGGGKVRNGFE). Composition is skewed to gly residues over residues 21 to 35 (RGIG…GRGV) and 42 to 52 (SGGGKVRNGFE).

The protein belongs to the universal ribosomal protein uL15 family. In terms of assembly, part of the 50S ribosomal subunit.

Functionally, binds to the 23S rRNA. The sequence is that of Large ribosomal subunit protein uL15 from Aeromonas hydrophila subsp. hydrophila (strain ATCC 7966 / DSM 30187 / BCRC 13018 / CCUG 14551 / JCM 1027 / KCTC 2358 / NCIMB 9240 / NCTC 8049).